Reading from the N-terminus, the 97-residue chain is DNA replication protein 1 (97 aa).

Residues 49-78 (IELEKKMTKLEHENKLMKNALYELSRMENN) are a coiled coil.

Belongs to the phi29likevirus DNA replication protein 1 family. In terms of assembly, homomultimer. Self-associates into large complexes forming long filamentous structures. Interacts (via N-terminus) with the primer terminal protein.

Its subcellular location is the host membrane. Functionally, protein that assembles into highly ordered structures and provides a specific site for viral DNA replication. Probably anchors the viral DNA replisome to the host membrane. This chain is DNA replication protein 1 (1C), found in Bacillus subtilis (Bacteriophage PZA).